A 754-amino-acid polypeptide reads, in one-letter code: Glutathione biosynthesis bifunctional protein GshAB (754 aa).

A glutamate--cysteine ligase region spans residues 1–333 (MHINQLLQHA…KAQKLNDKIA (333 aa)). One can recognise an ATP-grasp domain in the interval 489–752 (KKILRENGYP…LAKLFPEIST (264 aa)). Residue 516 to 574 (SQIKNKPIVVKPKTTNFGLGISIFETAASHNDYEKALDIAFIEDYSVLVEEFIPGTEYR) participates in ATP binding. Mg(2+) contacts are provided by Asp696, Glu717, and Asn719. Mn(2+)-binding residues include Asp696, Glu717, and Asn719.

The protein in the N-terminal section; belongs to the glutamate--cysteine ligase type 1 family. Type 2 subfamily. As to quaternary structure, monomer. It depends on Mg(2+) as a cofactor. Mn(2+) is required as a cofactor.

The catalysed reaction is L-cysteine + L-glutamate + ATP = gamma-L-glutamyl-L-cysteine + ADP + phosphate + H(+). It carries out the reaction gamma-L-glutamyl-L-cysteine + glycine + ATP = glutathione + ADP + phosphate + H(+). The protein operates within sulfur metabolism; glutathione biosynthesis; glutathione from L-cysteine and L-glutamate: step 1/2. It functions in the pathway sulfur metabolism; glutathione biosynthesis; glutathione from L-cysteine and L-glutamate: step 2/2. Synthesizes glutathione from L-glutamate and L-cysteine via gamma-L-glutamyl-L-cysteine. In Streptococcus mutans serotype c (strain ATCC 700610 / UA159), this protein is Glutathione biosynthesis bifunctional protein GshAB.